The primary structure comprises 412 residues: Glucose/galactose transporter (412 aa).

Helical transmembrane passes span 21–41 (YGFA…ITCL), 62–82 (LIQF…GQLV), 90–110 (GIVV…PAAS), 113–133 (VYAL…ILQV), 158–178 (FNSL…LSAA), 192–212 (FPYL…AILK), 239–259 (LGAI…SFLV), 310–330 (AFVA…IAMW), 331–351 (SVLA…SLAL), 363–383 (GILC…GALA), and 388–408 (IHLA…YGLI).

It belongs to the major facilitator superfamily. FHS transporter (TC 2.A.1.7) family.

It localises to the cell inner membrane. Intake of glucose and galactose. The chain is Glucose/galactose transporter (gluP) from Brucella abortus (strain 2308).